Here is a 337-residue protein sequence, read N- to C-terminus: MLAKSKTIRVAINGFGRIGRLVFRALLSQKNIEIVAVNDLTHPDTLAHLLKYDSAHGEFKKKVVAKDNTLMIDKKKVLVFSEKDPANLPWAEHNIDIVVESTGRFVSEEGASLHLQAGAKRVIISAPAKQKTIKTVVYNVNHKIINAEDKIISAASCTTNCLAPMVHVLEKNFGILHGTMVTVHAYTADQRLQDAPHSDLRRARAAACNIVPTTTGAAKAIGLVVPEATGKLNGMALRVPVLTGSIVELCVALEKDATVEQINQAMKKAASASFRYCEDEIVSSDIVGSEHGSIFDSKLTNIIEVDGNKLYKVYAWYDNESSYVNQLVRVVNYCAKL.

Residues 17–18, aspartate 39, lysine 83, and serine 125 contribute to the NAD(+) site; that span reads RI. D-glyceraldehyde 3-phosphate-binding positions include 156–158, threonine 187, arginine 202, 215–216, and arginine 238; these read SCT and TG. Cysteine 157 acts as the Nucleophile in catalysis. An NAD(+)-binding site is contributed by asparagine 319.

It belongs to the glyceraldehyde-3-phosphate dehydrogenase family. In terms of assembly, homotetramer.

The protein localises to the cytoplasm. It catalyses the reaction D-glyceraldehyde 3-phosphate + phosphate + NAD(+) = (2R)-3-phospho-glyceroyl phosphate + NADH + H(+). Its pathway is carbohydrate degradation; glycolysis; pyruvate from D-glyceraldehyde 3-phosphate: step 1/5. Its function is as follows. Catalyzes the oxidative phosphorylation of glyceraldehyde 3-phosphate (G3P) to 1,3-bisphosphoglycerate (BPG) using the cofactor NAD. The first reaction step involves the formation of a hemiacetal intermediate between G3P and a cysteine residue, and this hemiacetal intermediate is then oxidized to a thioester, with concomitant reduction of NAD to NADH. The reduced NADH is then exchanged with the second NAD, and the thioester is attacked by a nucleophilic inorganic phosphate to produce BPG. This is Glyceraldehyde-3-phosphate dehydrogenase (gapA) from Mycoplasma pneumoniae (strain ATCC 29342 / M129 / Subtype 1) (Mycoplasmoides pneumoniae).